Here is a 699-residue protein sequence, read N- to C-terminus: SPS-sensor serine protease component SSY5 (699 aa).

2 disordered regions span residues 1–113 (MVRF…LQGF) and 129–158 (VKEE…GNAR). The propeptide occupies 1–381 (MVRFFGLNKE…YCVKDYIKKA (381 aa)). The segment covering 8–18 (NKEKNEEKENT) has biased composition (basic and acidic residues). Residues 24 to 38 (NEQNAAETSSSNVSG) are compositionally biased toward polar residues. A compositionally biased stretch (basic and acidic residues) spans 39-51 (NEERIDPNSRDTN). Positions 61 to 78 (STTFGSSIQSSSIFSRGR) are enriched in low complexity. The segment covering 83–93 (TGASSSMATSE) has biased composition (polar residues). The span at 144–154 (SSSTSSTLATS) shows a compositional bias: low complexity. The interval 459–699 (FAITCAHVVL…QWDIDPQLDG (241 aa)) is serine protease. Catalysis depends on charge relay system residues His-465, Asp-545, and Ser-640.

The protein belongs to the peptidase S64 family. In terms of assembly, component of the plasma membrane SPS (SSY1-PTR3-SSY5) amino acid sensor complex. In terms of processing, the propeptide is autoproteolytically cleaved from the catalytic domain but remains associated, forming an inactive protease complex. This processing occurs even in the absence of signaling.

It localises to the cell membrane. Protease component of the SPS-sensor system, which regulates the expression of several amino acid-metabolizing enzymes and amino acid- and peptide-permeases in response to extracellular amino acid levels by controlling the activity of two transcription factors, STP1 and STP2. Catalyzes the activation of these transcription factors, which are synthesized as latent cytoplasmic precursors, by proteolytic removal of an N-terminal inhibitory domain containing cytoplasmic retention motifs. SSY5 binds as an inactive protease complex to STP1. In response to extracellular amino acids and dependent on the other SPS-sensor components, the inhibitory propeptide is induced to dissociate, and thereby enables the catalytic domain to process STP1. In Saccharomyces cerevisiae (strain AWRI1631) (Baker's yeast), this protein is SPS-sensor serine protease component SSY5 (SSY5).